An 858-amino-acid polypeptide reads, in one-letter code: DNA mismatch repair protein MutS (858 aa).

611–618 (GPNMGGKS) is a binding site for ATP.

This sequence belongs to the DNA mismatch repair MutS family.

In terms of biological role, this protein is involved in the repair of mismatches in DNA. It is possible that it carries out the mismatch recognition step. This protein has a weak ATPase activity. The sequence is that of DNA mismatch repair protein MutS from Actinobacillus succinogenes (strain ATCC 55618 / DSM 22257 / CCUG 43843 / 130Z).